The sequence spans 360 residues: Photosystem II protein D1 (360 aa).

3 helical membrane passes run 29 to 46 (YIGWFGVLMIPTLLTATS), 118 to 133 (HFFIGICAYMGREWEL), and 142 to 156 (WIAVAFSAPVAAATA). Chlorophyll a is bound at residue His-118. Tyr-126 lines the pheophytin a pocket. [CaMn4O5] cluster-binding residues include Asp-170 and Glu-189. Residues 197–218 (FHMMGVAGVFGGSLFSAMHGSL) traverse the membrane as a helical segment. Residue His-198 participates in chlorophyll a binding. A quinone contacts are provided by residues His-215 and 264–265 (SF). Fe cation is bound at residue His-215. Position 272 (His-272) interacts with Fe cation. The chain crosses the membrane as a helical span at residues 274–288 (FLALWPVVCICVTAL). Positions 332, 333, 342, and 344 each coordinate [CaMn4O5] cluster. A propeptide spanning residues 345–360 (SEVSLPVALNKVEING) is cleaved from the precursor.

This sequence belongs to the reaction center PufL/M/PsbA/D family. In terms of assembly, PSII is composed of 1 copy each of membrane proteins PsbA, PsbB, PsbC, PsbD, PsbE, PsbF, PsbH, PsbI, PsbJ, PsbK, PsbL, PsbM, PsbT, PsbY, PsbZ, Psb30/Ycf12, at least 3 peripheral proteins of the oxygen-evolving complex and a large number of cofactors. It forms dimeric complexes. The D1/D2 heterodimer binds P680, chlorophylls that are the primary electron donor of PSII, and subsequent electron acceptors. It shares a non-heme iron and each subunit binds pheophytin, quinone, additional chlorophylls, carotenoids and lipids. D1 provides most of the ligands for the Mn4-Ca-O5 cluster of the oxygen-evolving complex (OEC). There is also a Cl(-1) ion associated with D1 and D2, which is required for oxygen evolution. The PSII complex binds additional chlorophylls, carotenoids and specific lipids. is required as a cofactor. Post-translationally, tyr-161 forms a radical intermediate that is referred to as redox-active TyrZ, YZ or Y-Z. In terms of processing, C-terminally processed by CTPA; processing is essential to allow assembly of the oxygen-evolving complex and thus photosynthetic growth.

Its subcellular location is the plastid. It is found in the chloroplast thylakoid membrane. It catalyses the reaction 2 a plastoquinone + 4 hnu + 2 H2O = 2 a plastoquinol + O2. Functionally, photosystem II (PSII) is a light-driven water:plastoquinone oxidoreductase that uses light energy to abstract electrons from H(2)O, generating O(2) and a proton gradient subsequently used for ATP formation. It consists of a core antenna complex that captures photons, and an electron transfer chain that converts photonic excitation into a charge separation. The D1/D2 (PsbA/PsbD) reaction center heterodimer binds P680, the primary electron donor of PSII as well as several subsequent electron acceptors. The polypeptide is Photosystem II protein D1 (Galdieria sulphuraria (Red alga)).